Here is a 148-residue protein sequence, read N- to C-terminus: uncharacterized protein (148 aa).

The N-acetyltransferase domain occupies 1 to 144 (MNIKRITTEA…PHVLMTKEIS (144 aa)).

This is an uncharacterized protein from Bacillus subtilis (strain 168).